Here is a 459-residue protein sequence, read N- to C-terminus: Interleukin-7 receptor subunit alpha (459 aa).

A signal peptide spans 1–20 (MTILGTTFGVFFSLLQVVSG). The Extracellular portion of the chain corresponds to 21–241 (ESGYAQNGDL…NNHSGETNPT (221 aa)). Cys-42 and Cys-57 are disulfide-bonded. N-linked (GlcNAc...) asparagine glycosylation is found at Asn-49 and Asn-65. 2 cysteine pairs are disulfide-bonded: Cys-74–Cys-82 and Cys-108–Cys-118. Positions 131 to 231 (APFDLSVIYR…PSYYFRTPEI (101 aa)) constitute a Fibronectin type-III domain. N-linked (GlcNAc...) asparagine glycosylation is present at Asn-182. A WSXWS motif motif is present at residues 217–221 (WSEWS). The chain crosses the membrane as a helical span at residues 242 to 262 (LLTISILSVLSVVLLVILACV). The Cytoplasmic portion of the chain corresponds to 263-459 (LWKKRIKPII…VTMSSFCQKR (197 aa)). The short motif at 272 to 280 (IWPSLPDHK) is the Box 1 motif element. Position 282 is a phosphothreonine; by PKC (Thr-282). Residues 327-357 (TVPPQLEESETQRPGGDVQSPSWPSENVVTT) form a disordered region. Residues 345–357 (QSPSWPSENVVTT) are compositionally biased toward polar residues.

It belongs to the type I cytokine receptor family. Type 4 subfamily. The IL7 receptor is a heterodimer of IL7R and IL2RG. The TSLP receptor is a heterodimer of CRLF2 and IL7R. Interacts with CD53. Post-translationally, N-glycosylated IL-7Ralpha binds IL7 300-fold more tightly than the unglycosylated form. Ubiquitinated by MARCHF8; leading to lysosomal degradation.

The protein resides in the cell membrane. In terms of biological role, receptor for interleukin-7. Also acts as a receptor for thymic stromal lymphopoietin (TSLP). This Callithrix jacchus (White-tufted-ear marmoset) protein is Interleukin-7 receptor subunit alpha (IL7R).